Consider the following 1242-residue polypeptide: DNA-directed RNA polymerase RPB2 homolog (1242 aa).

The segment at 1180–1201 (CRNCGEPAIYNASHPIYKCMNC) adopts a C4-type zinc-finger fold.

This sequence belongs to the RNA polymerase beta chain family. In terms of assembly, part of the viral DNA-directed RNA polymerase that consists of 8 polII-like subunits (RPB1, RPB2, RPB3, RPB5, RPB6, RPB7, RPB9, RPB10), a capping enzyme and a termination factor.

It localises to the host cytoplasm. The protein resides in the virion. The enzyme catalyses RNA(n) + a ribonucleoside 5'-triphosphate = RNA(n+1) + diphosphate. Functionally, catalytic component of the DNA-directed RNA polymerase (RNAP) that catalyzes the transcription in the cytoplasm of viral DNA into RNA using the four ribonucleoside triphosphates as substrates. Forms the polymerase active center together with RPB1. Part of the core element with the central large cleft, the clamp element that moves to open and close the cleft and the jaws that are thought to grab the incoming DNA template. In African swine fever virus (isolate Pig/Kenya/KEN-50/1950) (ASFV), this protein is DNA-directed RNA polymerase RPB2 homolog.